Consider the following 308-residue polypeptide: Ribosomal RNA large subunit methyltransferase F (308 aa).

It belongs to the methyltransferase superfamily. METTL16/RlmF family.

The protein localises to the cytoplasm. It carries out the reaction adenosine(1618) in 23S rRNA + S-adenosyl-L-methionine = N(6)-methyladenosine(1618) in 23S rRNA + S-adenosyl-L-homocysteine + H(+). Specifically methylates the adenine in position 1618 of 23S rRNA. The sequence is that of Ribosomal RNA large subunit methyltransferase F from Escherichia coli O6:H1 (strain CFT073 / ATCC 700928 / UPEC).